The following is a 274-amino-acid chain: 2,3,4,5-tetrahydropyridine-2,6-dicarboxylate N-succinyltransferase (274 aa).

This sequence belongs to the transferase hexapeptide repeat family.

The protein resides in the cytoplasm. The enzyme catalyses (S)-2,3,4,5-tetrahydrodipicolinate + succinyl-CoA + H2O = (S)-2-succinylamino-6-oxoheptanedioate + CoA. The protein operates within amino-acid biosynthesis; L-lysine biosynthesis via DAP pathway; LL-2,6-diaminopimelate from (S)-tetrahydrodipicolinate (succinylase route): step 1/3. This is 2,3,4,5-tetrahydropyridine-2,6-dicarboxylate N-succinyltransferase from Leptothrix cholodnii (strain ATCC 51168 / LMG 8142 / SP-6) (Leptothrix discophora (strain SP-6)).